A 238-amino-acid chain; its full sequence is Large ribosomal subunit protein uL1 (238 aa).

Belongs to the universal ribosomal protein uL1 family. As to quaternary structure, part of the 50S ribosomal subunit.

Binds directly to 23S rRNA. The L1 stalk is quite mobile in the ribosome, and is involved in E site tRNA release. In terms of biological role, protein L1 is also a translational repressor protein, it controls the translation of the L11 operon by binding to its mRNA. This chain is Large ribosomal subunit protein uL1, found in Rippkaea orientalis (strain PCC 8801 / RF-1) (Cyanothece sp. (strain PCC 8801)).